A 165-amino-acid polypeptide reads, in one-letter code: Ribonuclease H2 subunit C (165 aa).

At methionine 1 the chain carries N-acetylmethionine.

This sequence belongs to the RNase H2 subunit C family. The RNase H2 complex is a heterotrimer composed of the catalytic subunit RNASEH2A and the non-catalytic subunits RNASEH2B and RNASEH2C.

It is found in the nucleus. In terms of biological role, non catalytic subunit of RNase H2, an endonuclease that specifically degrades the RNA of RNA:DNA hybrids. Participates in DNA replication, possibly by mediating the removal of lagging-strand Okazaki fragment RNA primers during DNA replication. Mediates the excision of single ribonucleotides from DNA:RNA duplexes. This chain is Ribonuclease H2 subunit C (RNASEH2C), found in Bos taurus (Bovine).